Here is a 331-residue protein sequence, read N- to C-terminus: GTP-binding protein RHO5 (331 aa).

GTP is bound at residue glycine 10 to threonine 17. Residues alanine 51 to threonine 76 are disordered. Over residues serine 66 to serine 75 the composition is skewed to low complexity. GTP-binding positions include aspartate 87–glutamine 91 and threonine 156–aspartate 159. Phosphoserine is present on residues serine 223 and serine 228. Residues threonine 232 and threonine 244 each carry the phosphothreonine modification. Residues threonine 239 to leucine 331 form a disordered region. Positions histidine 258–glutamine 273 are enriched in polar residues. A Glycyl lysine isopeptide (Lys-Gly) (interchain with G-Cter in ubiquitin) cross-link involves residue lysine 276. A compositionally biased stretch (basic and acidic residues) spans glycine 287–lysine 297. A compositionally biased stretch (basic residues) spans histidine 308–leucine 331. A Cysteine methyl ester modification is found at cysteine 328. Cysteine 328 carries S-geranylgeranyl cysteine lipidation. The propeptide at valine 329–leucine 331 is removed in mature form.

It belongs to the small GTPase superfamily. Rho family. As to quaternary structure, interacts with RGD2.

Its subcellular location is the membrane. It is found in the mitochondrion. Small GTPase that negatively regulates a MAP kinase branch, downstream of SLT2, of the PKC1-mediated signal transduction pathway. With its specific guanine nucleotide exchange factor (GEF), the heterodimeric complex DCK1/LMO1, relocates to mitochondria upon oxidative stress and triggers cell death. The DCK1/LMO1/RHO5 signaling module that mediates mitochondrial turnover under nitrogen starvation conditions via mitophagy. The DCK1/LMO1/RHO5 signaling module also plays a role in cell wall integrity signaling. This is GTP-binding protein RHO5 from Saccharomyces cerevisiae (strain ATCC 204508 / S288c) (Baker's yeast).